A 540-amino-acid chain; its full sequence is Probable LRR receptor-like serine/threonine-protein kinase RPK1 (540 aa).

A signal peptide spans 1 to 19 (MKLLGLVFLLFNLFMFSFS). Over 20 to 198 (RKLLTESGGG…PGKSGLYPIE (179 aa)) the chain is Extracellular. 2 LRR repeats span residues 118–142 (LSEIRVLSLSFNDLRGEIPKEIWGL) and 144–169 (KLEILDLKGNNFIGGIRVVDNVVLRK). A helical transmembrane segment spans residues 199–219 (IASIVSASVIVFVLLVLVILF). Over 220–540 (IYTRKWKRNS…LLKRIQPSRL (321 aa)) the chain is Cytoplasmic. Residues threonine 250 and threonine 258 each carry the phosphothreonine modification. Residues 261 to 535 (FSNSNCIGHG…KQAVRLLKRI (275 aa)) enclose the Protein kinase domain. ATP contacts are provided by residues 267 to 275 (IGHGGFGST) and lysine 289. Phosphotyrosine occurs at positions 334 and 372. Residue aspartate 385 is the Proton acceptor of the active site. Phosphotyrosine is present on tyrosine 427. Threonine 435 carries the phosphothreonine modification.

Belongs to the protein kinase superfamily. Ser/Thr protein kinase family. Expressed in roots, stems, leaves, and flowers.

It is found in the cell membrane. It catalyses the reaction L-seryl-[protein] + ATP = O-phospho-L-seryl-[protein] + ADP + H(+). The catalysed reaction is L-threonyl-[protein] + ATP = O-phospho-L-threonyl-[protein] + ADP + H(+). Involved in the main abscisic acid-mediated (ABA) signaling pathway and in early ABA perception. Together with RPK2, required for pattern formation along the radial axis (e.g. the apical embryonic domain cell types that generate cotyledon primordia), and the apical-basal axis (e.g. differentiation of the basal pole during early embryogenesis). In Arabidopsis thaliana (Mouse-ear cress), this protein is Probable LRR receptor-like serine/threonine-protein kinase RPK1 (RPK1).